Reading from the N-terminus, the 383-residue chain is Lipid-A-disaccharide synthase (383 aa).

This sequence belongs to the LpxB family.

It carries out the reaction a lipid X + a UDP-2-N,3-O-bis[(3R)-3-hydroxyacyl]-alpha-D-glucosamine = a lipid A disaccharide + UDP + H(+). Its pathway is bacterial outer membrane biogenesis; LPS lipid A biosynthesis. Its function is as follows. Condensation of UDP-2,3-diacylglucosamine and 2,3-diacylglucosamine-1-phosphate to form lipid A disaccharide, a precursor of lipid A, a phosphorylated glycolipid that anchors the lipopolysaccharide to the outer membrane of the cell. The sequence is that of Lipid-A-disaccharide synthase from Syntrophus aciditrophicus (strain SB).